The primary structure comprises 749 residues: NAD(P)H-quinone oxidoreductase subunit 5, chloroplastic (749 aa).

17 consecutive transmembrane segments (helical) span residues 9 to 29 (WIIP…LLLF), 40 to 60 (WAFQ…NLSI), 89 to 109 (IDPL…MVLI), 125 to 145 (FAYM…SNLI), 147 to 167 (IYIF…FWFT), 185 to 205 (GDFG…SFEF), 219 to 239 (NEVN…GAVA), 258 to 278 (TPIS…FLVA), 290 to 312 (IMNF…ALAQ), 327 to 347 (LGYM…FHLI), 354 to 374 (ALLF…VGYC), 396 to 416 (TSFL…CFWS), 425 to 445 (WLYS…TAFY), 549 to 569 (LFPI…GIPF), 608 to 628 (VFSV…YKPV), 694 to 714 (IIDG…EVIK), and 725 to 745 (LFFY…LNVF).

This sequence belongs to the complex I subunit 5 family. As to quaternary structure, NDH is composed of at least 16 different subunits, 5 of which are encoded in the nucleus.

It localises to the plastid. It is found in the chloroplast thylakoid membrane. It carries out the reaction a plastoquinone + NADH + (n+1) H(+)(in) = a plastoquinol + NAD(+) + n H(+)(out). It catalyses the reaction a plastoquinone + NADPH + (n+1) H(+)(in) = a plastoquinol + NADP(+) + n H(+)(out). Functionally, NDH shuttles electrons from NAD(P)H:plastoquinone, via FMN and iron-sulfur (Fe-S) centers, to quinones in the photosynthetic chain and possibly in a chloroplast respiratory chain. The immediate electron acceptor for the enzyme in this species is believed to be plastoquinone. Couples the redox reaction to proton translocation, and thus conserves the redox energy in a proton gradient. The protein is NAD(P)H-quinone oxidoreductase subunit 5, chloroplastic (ndhF) of Atractylodes lancea (Atractylodes japonica).